We begin with the raw amino-acid sequence, 119 residues long: UPF0102 protein FP2501 (119 aa).

The protein belongs to the UPF0102 family.

The chain is UPF0102 protein FP2501 from Flavobacterium psychrophilum (strain ATCC 49511 / DSM 21280 / CIP 103535 / JIP02/86).